Here is a 188-residue protein sequence, read N- to C-terminus: Ribosomal RNA small subunit methyltransferase G (188 aa).

Residues G69, F74, V119–Q120, and R134 each bind S-adenosyl-L-methionine.

It belongs to the methyltransferase superfamily. RNA methyltransferase RsmG family.

The protein localises to the cytoplasm. The catalysed reaction is guanosine(527) in 16S rRNA + S-adenosyl-L-methionine = N(7)-methylguanosine(527) in 16S rRNA + S-adenosyl-L-homocysteine. Its function is as follows. Specifically methylates the N7 position of guanine in position 527 of 16S rRNA. The sequence is that of Ribosomal RNA small subunit methyltransferase G from Campylobacter jejuni subsp. jejuni serotype O:23/36 (strain 81-176).